Consider the following 183-residue polypeptide: uncharacterized protein (183 aa).

It belongs to the isochorismatase family.

This is an uncharacterized protein from Bacillus subtilis (strain 168).